A 176-amino-acid polypeptide reads, in one-letter code: Crossover junction endodeoxyribonuclease RuvC (176 aa).

Catalysis depends on residues Asp10, Glu69, and Asp141. Residues Asp10, Glu69, and Asp141 each contribute to the Mg(2+) site.

Belongs to the RuvC family. In terms of assembly, homodimer which binds Holliday junction (HJ) DNA. The HJ becomes 2-fold symmetrical on binding to RuvC with unstacked arms; it has a different conformation from HJ DNA in complex with RuvA. In the full resolvosome a probable DNA-RuvA(4)-RuvB(12)-RuvC(2) complex forms which resolves the HJ. It depends on Mg(2+) as a cofactor.

The protein resides in the cytoplasm. The catalysed reaction is Endonucleolytic cleavage at a junction such as a reciprocal single-stranded crossover between two homologous DNA duplexes (Holliday junction).. Functionally, the RuvA-RuvB-RuvC complex processes Holliday junction (HJ) DNA during genetic recombination and DNA repair. Endonuclease that resolves HJ intermediates. Cleaves cruciform DNA by making single-stranded nicks across the HJ at symmetrical positions within the homologous arms, yielding a 5'-phosphate and a 3'-hydroxyl group; requires a central core of homology in the junction. The consensus cleavage sequence is 5'-(A/T)TT(C/G)-3'. Cleavage occurs on the 3'-side of the TT dinucleotide at the point of strand exchange. HJ branch migration catalyzed by RuvA-RuvB allows RuvC to scan DNA until it finds its consensus sequence, where it cleaves and resolves the cruciform DNA. The polypeptide is Crossover junction endodeoxyribonuclease RuvC (Dichelobacter nodosus (strain VCS1703A)).